A 322-amino-acid polypeptide reads, in one-letter code: Transaldolase (322 aa).

Catalysis depends on K132, which acts as the Schiff-base intermediate with substrate. S268 and S269 each carry phosphoserine.

It belongs to the transaldolase family. Type 1 subfamily. As to quaternary structure, homodimer.

The catalysed reaction is D-sedoheptulose 7-phosphate + D-glyceraldehyde 3-phosphate = D-erythrose 4-phosphate + beta-D-fructose 6-phosphate. It participates in carbohydrate degradation; pentose phosphate pathway; D-glyceraldehyde 3-phosphate and beta-D-fructose 6-phosphate from D-ribose 5-phosphate and D-xylulose 5-phosphate (non-oxidative stage): step 2/3. Transaldolase is important for the balance of metabolites in the pentose-phosphate pathway. The polypeptide is Transaldolase (tal1) (Schizosaccharomyces pombe (strain 972 / ATCC 24843) (Fission yeast)).